The chain runs to 267 residues: 3-methyl-2-oxobutanoate hydroxymethyltransferase (267 aa).

Mg(2+) contacts are provided by D45 and D84. 3-methyl-2-oxobutanoate-binding positions include 45–46, D84, and K113; that span reads DS. E115 lines the Mg(2+) pocket. E182 (proton acceptor) is an active-site residue.

Belongs to the PanB family. In terms of assembly, homodecamer; pentamer of dimers. Requires Mg(2+) as cofactor.

It is found in the cytoplasm. It catalyses the reaction 3-methyl-2-oxobutanoate + (6R)-5,10-methylene-5,6,7,8-tetrahydrofolate + H2O = 2-dehydropantoate + (6S)-5,6,7,8-tetrahydrofolate. The protein operates within cofactor biosynthesis; coenzyme A biosynthesis. In terms of biological role, catalyzes the reversible reaction in which hydroxymethyl group from 5,10-methylenetetrahydrofolate is transferred onto alpha-ketoisovalerate to form ketopantoate. The sequence is that of 3-methyl-2-oxobutanoate hydroxymethyltransferase from Sulfurisphaera tokodaii (strain DSM 16993 / JCM 10545 / NBRC 100140 / 7) (Sulfolobus tokodaii).